Consider the following 177-residue polypeptide: Eggshell protein (177 aa).

An N-terminal signal peptide occupies residues 1 to 18; it reads MKQSLTLVFLVAIGYATA. Repeat copies occupy residues 25 to 41, 42 to 59, 60 to 75, 76 to 91, and 92 to 112. Positions 25-112 are 5 X approximate tandem repeats; sequence YSGGYGGGCY…GCSGGNCGGG (88 aa). The segment covering 149-166 has biased composition (gly residues); sequence GSGKGKGGGKGGKGGKGG. The tract at residues 149–177 is disordered; sequence GSGKGKGGGKGGKGGKGGTYKPSHYGGGY.

The protein is Eggshell protein (F10) of Schistosoma mansoni (Blood fluke).